Consider the following 938-residue polypeptide: Breast cancer type 2 susceptibility protein homolog (938 aa).

2 stretches are compositionally biased toward basic and acidic residues: residues 320 to 339 and 409 to 425; these read LEPSFQKEQKSSKDSNESKI and NSIKRTDEEQPEKETPN. 2 disordered regions span residues 320–359 and 409–434; these read LEPSFQKEQKSSKDSNESKIRAPSKPSCDITEKNEGTTVL and NSIKRTDEEQPEKETPNKSRSTSSHQ. BRCA2 repeat units lie at residues 537–571, 638–672, and 713–747; these read AEPEFCGFRTASNKAIPISEKMKIKTAEFMAEFQY, NEPQFFGFRTASKKAIEITEAMEKRGAMFLAQSRA, and SETEFFGFRTASNKGIVISENTKMKVAQFMSEFQA. Over residues 870–879 the composition is skewed to polar residues; it reads SSTETSTSCA. The interval 870–938 is disordered; the sequence is SSTETSTSCA…RRLGLSRSRY (69 aa). A compositionally biased stretch (basic and acidic residues) spans 898-915; the sequence is ADRDLNRSKDCAKNRQDA. Residues 926–938 show a composition bias toward basic residues; the sequence is KKSRRLGLSRSRY.

In terms of assembly, interacts with Rad9 and spn-A/Rad51.

It is found in the nucleus. Its function is as follows. Involved in and required for double-strand break repair by meiotic and mitotic homologous recombination. During meiosis, has a dual role in the repair of meiotic double-stranded breaks and the efficient activation of the meiotic recombination checkpoint. The sequence is that of Breast cancer type 2 susceptibility protein homolog from Drosophila sechellia (Fruit fly).